Reading from the N-terminus, the 2387-residue chain is Paternally-expressed gene 3 protein (2387 aa).

The SCAN box domain occupies 44 to 126 (HQRFRNFLYV…ALLEDYEAMY (83 aa)). 4 disordered regions span residues 127–194 (EPED…RDLA), 262–305 (DGHS…ICEA), 321–371 (ARSS…AFGG), and 392–423 (RYHF…EARR). Composition is skewed to basic and acidic residues over residues 160-179 (SERE…DRWP), 291-305 (PETK…ICEA), 321-364 (ARSS…ERGP), and 404-423 (HDPR…EARR). The C2H2-type 1 zinc-finger motif lies at 451–473 (YVCDECGRSFAVISEFVEHQIVH). The disordered stretch occupies residues 492-542 (SEAQSRPEGARRSEGAQAAGLAEHRGGQAQEHLRGSGDEEQDEPFLPSPTF). A compositionally biased stretch (basic and acidic residues) spans 513-528 (AEHRGGQAQEHLRGSG). 2 consecutive C2H2-type zinc fingers follow at residues 555 to 577 (YECK…QKIH) and 610 to 632 (YECK…QKTH). The C2H2-type 4; degenerate zinc-finger motif lies at 668–690 (YDFREGGDAFGRSSDFMEHQKIH). Disordered regions lie at residues 704–747 (PLLH…EARG), 764–797 (FRPP…ESPY), and 820–858 (DHLA…NIER). Polar residues predominate over residues 711–720 (MPGSQKSHTI). Residues 846-856 (HQKARAKKKNI) are compositionally biased toward basic residues. The segment at 884-906 (YECLECGEFFVRSSELAEHQKIH) adopts a C2H2-type 5 zinc-finger fold. 57 consecutive repeat copies span residues 965 to 973 (PAQTSYAVE), 974 to 982 (PAQTSYAEE), 983 to 991 (PAQTSYTEA), 1001 to 1009 (PAQTSCIEE), 1010 to 1018 (PAQTSYTNP), 1028 to 1036 (PAQTSYTEA), 1046 to 1054 (PAQTSCIEE), 1055 to 1063 (PAQTSYTNP), 1073 to 1081 (PAQTSYTEA), 1091 to 1099 (PAQTNYTEE), 1109 to 1117 (PSQTSCIEE), 1118 to 1126 (PAQTSYTDP), 1136 to 1144 (PAQTSYTQE), 1145 to 1153 (PAQTSCTEE), 1154 to 1162 (PAQTSCTEE), 1163 to 1171 (PAQTSYTQE), 1172 to 1180 (PAQTSYTKE), 1190 to 1198 (PAQTSCIEE), 1199 to 1207 (PAQTNYTKE), 1217 to 1225 (PAQTSYTDP), 1235 to 1243 (PAQTNYTVE), 1253 to 1261 (PSQTSCIEE), 1280 to 1288 (PAQTSCTEE), 1289 to 1297 (PAQTSYTQE), 1298 to 1306 (PAQTSCTEE), 1307 to 1315 (PAQTSCTEE), 1316 to 1324 (PAQTSYTQE), 1325 to 1333 (PAQTSCTEE), 1334 to 1342 (PAQTSYTQE), 1343 to 1351 (PAQTSCTEE), 1352 to 1360 (PAQTSYTEE), 1361 to 1369 (PAQTSYTEE), 1370 to 1378 (PAQTSYTQE), 1379 to 1387 (PAQTSCTEE), 1388 to 1396 (PAQTSYTEE), 1397 to 1405 (PAQTSYTEE), 1406 to 1414 (PAQTSYTQE), 1415 to 1423 (PAQTSYTEE), 1424 to 1432 (PAQTSYTEE), 1433 to 1441 (PAQTSYAQE), 1442 to 1450 (PAQTSYAEE), 1451 to 1459 (PAQTSYAEE), 1460 to 1468 (PAQTSYAEE), 1469 to 1477 (PAQTSYTQE), 1478 to 1486 (PAQTNYTEE), 1496 to 1504 (PAQTSYAEE), 1505 to 1513 (PAQTSYPEE), 1514 to 1522 (PAQTSYAEE), 1523 to 1531 (PAQTSYAEE), 1532 to 1540 (PAQTSYPEE), 1541 to 1549 (PAQTSYTEE), 1550 to 1558 (PAQTSYAKE), 1559 to 1567 (PAQTSYPEE), 1568 to 1576 (PAQTSYAEE), 1577 to 1585 (PAQTSYAEE), 1586 to 1594 (PAQTSYAEE), and 1595 to 1603 (PAQTSYSEE). Polar residues-rich tracts occupy residues 965–989 (PAQT…TSYT) and 1001–1020 (PAQT…NPAA). Residues 965–1603 (PAQTSYAVEP…EPAQTSYSEE (639 aa)) are 37 X 9 AA repeat of P-A-Q-T-X-Y-X-X-E. Positions 965-1651 (PAQTSYAVEP…RPDMPRNQPR (687 aa)) are disordered. Residues 1046-1079 (PAQTSCIEEPAQTSYTNPAAETSYTEEPAQTSYT) are compositionally biased toward polar residues. Composition is skewed to polar residues over residues 1107–1178 (EEPS…TSYT), 1190–1206 (PAQT…NYTK), 1217–1242 (PAQT…NYTV), 1251–1484 (EEPS…TNYT), and 1496–1601 (PAQT…TSYS). A C2H2-type 6; degenerate zinc finger spans residues 1859-1881 (NECKECGECFATVEDLGRHQKIY). Residues 1900–1921 (LGLDGSPEEELEEQEEPEEPED) are disordered. Over residues 1905 to 1921 (SPEEELEEQEEPEEPED) the composition is skewed to acidic residues. 5 consecutive C2H2-type zinc fingers follow at residues 1924 to 1946 (YGCK…QKVH), 1980 to 2002 (YECP…QKVH), 2040 to 2062 (PQCQ…ARGH), 2097 to 2119 (YECE…MRVH), and 2148 to 2170 (YECK…QKLH). The segment at 2059-2102 (ARGHAGEGLPDQGQGGAGAAGPGPAPTEPQQDPGEEQRYECETC) is disordered. Residues 2204-2322 (NVEAAEPEVE…DCGECGETFP (119 aa)) are disordered. Acidic residues-rich tracts occupy residues 2208-2228 (AEPE…EVEA) and 2257-2311 (EQPD…EEPY). 2 C2H2-type zinc fingers span residues 2312–2334 (YDCG…LTAH) and 2363–2385 (FKCD…QNTH).

It belongs to the krueppel C2H2-type zinc-finger protein family. As to quaternary structure, homodimer. Interacts with SIAH1A and SIAH2. Interacts with TRAF2. In terms of tissue distribution, expressed at high levels in the cerebellum and at moderate levels in the testis and ovary.

The protein resides in the nucleus. It localises to the cytoplasm. Its function is as follows. Induces apoptosis in cooperation with SIAH1A. Acts as a mediator between p53/TP53 and BAX in a neuronal death pathway that is activated by DNA damage. Acts synergistically with TRAF2 and inhibits TNF induced apoptosis through activation of NF-kappa-B. In Bos taurus (Bovine), this protein is Paternally-expressed gene 3 protein (PEG3).